The following is a 579-amino-acid chain: Rhoptry surface protein CERLI2 (579 aa).

In terms of domain architecture, C2 spans 52-84 (LHNYRTFYLLIKINEIFNINKYKQIYIIVNTDK). A run of 11 repeats spans residues 442–451 (QTDEIKNDNI), 452–461 (QTDEIKNDHI), 462–471 (QTDEIKNDNI), 472–481 (QTDEIKNDNI), 482–491 (QTDEIKNDHI), 492–501 (QTDEIKNDNI), 502–511 (QTDEIKNDNI), 522–531 (QTDEINNDHI), 532–541 (QTDEIKNDHI), 542–551 (QTDEIKNDHI), and 552–561 (QTDEIKNDIN). The 12 X 10 AA tandem repeat of Q-T-E-I-[K/N]-N-D-[H/N/I][I/N] stretch occupies residues 442–561 (QTDEIKNDNI…QTDEIKNDIN (120 aa)).

It localises to the cytoplasmic vesicle. The protein resides in the secretory vesicle. Its subcellular location is the rhoptry membrane. The protein localises to the cell membrane. It is found in the host cell membrane. Functionally, plays an important role in rhoptry physiology and thus is essential for merozoite invasion of host erythrocytes. The chain is Rhoptry surface protein CERLI2 from Plasmodium falciparum (isolate 3D7).